A 516-amino-acid chain; its full sequence is GMP synthase [glutamine-hydrolyzing] (516 aa).

Residues 7–199 (KIIILDFGSQ…VFGLCKCQAT (193 aa)) enclose the Glutamine amidotransferase type-1 domain. Catalysis depends on cysteine 84, which acts as the Nucleophile. Residues histidine 173 and glutamate 175 contribute to the active site. A GMPS ATP-PPase domain is found at 200-391 (WTMQGFIESN…LGLPDEAVHR (192 aa)). 227-233 (SGGVDSS) serves as a coordination point for ATP.

Homodimer.

It catalyses the reaction XMP + L-glutamine + ATP + H2O = GMP + L-glutamate + AMP + diphosphate + 2 H(+). It functions in the pathway purine metabolism; GMP biosynthesis; GMP from XMP (L-Gln route): step 1/1. Functionally, catalyzes the synthesis of GMP from XMP. The protein is GMP synthase [glutamine-hydrolyzing] of Desulfotalea psychrophila (strain LSv54 / DSM 12343).